We begin with the raw amino-acid sequence, 251 residues long: Coproheme decarboxylase (251 aa).

Residues arginine 133, 147 to 151, histidine 174, glutamine 187, and serine 225 each bind Fe-coproporphyrin III; that span reads YPMSK. Tyrosine 147 is a catalytic residue.

This sequence belongs to the ChdC family. Type 1 subfamily. It depends on Fe-coproporphyrin III as a cofactor.

It catalyses the reaction Fe-coproporphyrin III + 2 H2O2 + 2 H(+) = heme b + 2 CO2 + 4 H2O. The catalysed reaction is Fe-coproporphyrin III + H2O2 + H(+) = harderoheme III + CO2 + 2 H2O. It carries out the reaction harderoheme III + H2O2 + H(+) = heme b + CO2 + 2 H2O. It functions in the pathway porphyrin-containing compound metabolism; protoheme biosynthesis. In terms of biological role, involved in coproporphyrin-dependent heme b biosynthesis. Catalyzes the decarboxylation of Fe-coproporphyrin III (coproheme) to heme b (protoheme IX), the last step of the pathway. The reaction occurs in a stepwise manner with a three-propionate intermediate. This chain is Coproheme decarboxylase, found in Listeria monocytogenes serotype 4a (strain HCC23).